The sequence spans 595 residues: Aspartate--tRNA ligase (595 aa).

E180 serves as a coordination point for L-aspartate. The interval 204–207 (QLFK) is aspartate. R226 contributes to the L-aspartate binding site. ATP is bound by residues 226–228 (RDE) and Q235. Residue H454 participates in L-aspartate binding. E488 is an ATP binding site. R495 is a binding site for L-aspartate. 540 to 543 (GLDR) lines the ATP pocket.

The protein belongs to the class-II aminoacyl-tRNA synthetase family. Type 1 subfamily. As to quaternary structure, homodimer.

It localises to the cytoplasm. The enzyme catalyses tRNA(Asp) + L-aspartate + ATP = L-aspartyl-tRNA(Asp) + AMP + diphosphate. Functionally, catalyzes the attachment of L-aspartate to tRNA(Asp) in a two-step reaction: L-aspartate is first activated by ATP to form Asp-AMP and then transferred to the acceptor end of tRNA(Asp). This is Aspartate--tRNA ligase from Clostridium acetobutylicum (strain ATCC 824 / DSM 792 / JCM 1419 / IAM 19013 / LMG 5710 / NBRC 13948 / NRRL B-527 / VKM B-1787 / 2291 / W).